A 292-amino-acid polypeptide reads, in one-letter code: AKT-interacting protein homolog B (292 aa).

The disordered stretch occupies residues 1–44 (MNPFWNMPSASVRKRSDNDEKIATADQKISPARSSSAKKQLPSI). The segment covering 14 to 23 (KRSDNDEKIA) has biased composition (basic and acidic residues). In terms of domain architecture, UBC core spans 75–223 (YLEYSLLAEF…VVDSVKLCNS (149 aa)).

The protein belongs to the ubiquitin-conjugating enzyme family. FTS subfamily.

The protein resides in the cytoplasm. Its subcellular location is the cell membrane. May function to promote vesicle trafficking and/or fusion. May also regulate apoptosis. This chain is AKT-interacting protein homolog B (aktip-b), found in Xenopus laevis (African clawed frog).